The primary structure comprises 876 residues: Leucine--tRNA ligase (876 aa).

A 'HIGH' region motif is present at residues 42–52; it reads PYPSGKLHMGH. Positions 634–638 match the 'KMSKS' region motif; sequence KMSKS. An ATP-binding site is contributed by lysine 637.

The protein belongs to the class-I aminoacyl-tRNA synthetase family.

It localises to the cytoplasm. The catalysed reaction is tRNA(Leu) + L-leucine + ATP = L-leucyl-tRNA(Leu) + AMP + diphosphate. The protein is Leucine--tRNA ligase of Neisseria gonorrhoeae (strain NCCP11945).